Consider the following 236-residue polypeptide: Truncated formate dehydrogenase 2 (236 aa).

NAD(+) contacts are provided by residues 36–37 (RI), aspartate 57, 104–108 (PLHKD), threonine 130, aspartate 156, and 185–188 (HISG).

The protein belongs to the D-isomer specific 2-hydroxyacid dehydrogenase family. FDH subfamily.

This chain is Truncated formate dehydrogenase 2, found in Saccharomyces cerevisiae (strain ATCC 204508 / S288c) (Baker's yeast).